The chain runs to 528 residues: Probable histone-arginine methyltransferase 1.4 (528 aa).

Methionine 1 is subject to N-acetylmethionine. The 316-residue stretch at 144-459 (EAASAKMYFH…QSYTINLTLS (316 aa)) folds into the SAM-dependent MTase PRMT-type domain. Glutamine 161, arginine 170, glycine 194, glutamate 216, and glutamate 246 together coordinate S-adenosyl-L-methionine. Residues glutamate 260 and glutamate 269 contribute to the active site. Threonine 274 is an S-adenosyl-L-methionine binding site.

This sequence belongs to the class I-like SAM-binding methyltransferase superfamily. Protein arginine N-methyltransferase family.

It localises to the nucleus. Its subcellular location is the cytoplasm. The enzyme catalyses L-arginyl-[protein] + 2 S-adenosyl-L-methionine = N(omega),N(omega)-dimethyl-L-arginyl-[protein] + 2 S-adenosyl-L-homocysteine + 2 H(+). Methylates (mono- and asymmetric dimethylation) the guanidino nitrogens of arginyl residues in several proteins involved in DNA packaging, transcription regulation, and mRNA stability. Recruited to promoters upon gene activation, methylates histone H3 and activates transcription via chromatin remodeling. The chain is Probable histone-arginine methyltransferase 1.4 (PRMT14) from Arabidopsis thaliana (Mouse-ear cress).